We begin with the raw amino-acid sequence, 162 residues long: CASP-like protein 1C1 (162 aa).

The Cytoplasmic portion of the chain corresponds to 1 to 7; the sequence is MAKLHRL. The helical transmembrane segment at 8–28 threads the bilayer; that stretch reads ISAVLRLAAAGAAAAAAIIMV. Topologically, residues 29–50 are extracellular; the sequence is TSHETTSFFGIEMEAKYSYTPS. A helical transmembrane segment spans residues 51–71; sequence FVFFVVAFAVAFAYSLLALLA. Over 72-79 the chain is Cytoplasmic; the sequence is RPGSTASR. A helical membrane pass occupies residues 80–100; the sequence is LLLLSDVMVGMLLTGAVAATG. At 101 to 128 the chain is on the extracellular side; it reads AISQVGKSGNEHAGWLPICAQVQAYCSH. Residues 129–149 form a helical membrane-spanning segment; it reads VMGALIAGFVSLLLYFLIIMY. The Cytoplasmic segment spans residues 150 to 162; that stretch reads SLHAVAEPLCSCH.

This sequence belongs to the Casparian strip membrane proteins (CASP) family. As to quaternary structure, homodimer and heterodimers.

The protein localises to the cell membrane. The sequence is that of CASP-like protein 1C1 from Sorghum bicolor (Sorghum).